A 351-amino-acid polypeptide reads, in one-letter code: Cytochrome c biogenesis protein CcsA (351 aa).

The next 8 helical transmembrane spans lie at valine 17–isoleucine 37, asparagine 38–alanine 58, leucine 68–isoleucine 88, leucine 97–leucine 117, methionine 143–isoleucine 163, isoleucine 259–asparagine 279, tryptophan 286–leucine 306, and alanine 320–leucine 340.

The protein belongs to the CcmF/CycK/Ccl1/NrfE/CcsA family. May interact with ccs1.

The protein localises to the cellular thylakoid membrane. Its function is as follows. Required during biogenesis of c-type cytochromes (cytochrome c6 and cytochrome f) at the step of heme attachment. This is Cytochrome c biogenesis protein CcsA from Nostoc sp. (strain PCC 7120 / SAG 25.82 / UTEX 2576).